The sequence spans 347 residues: DNA-directed RNA polymerase subunit alpha (347 aa).

The alpha N-terminal domain (alpha-NTD) stretch occupies residues 1 to 226 (MLISQRPTLS…ELFGLARELN (226 aa)). The tract at residues 243 to 347 (HIASFALPID…SQDYAETEQL (105 aa)) is alpha C-terminal domain (alpha-CTD). Positions 326–347 (TTGTWSTDGAYDSQDYAETEQL) are disordered.

The protein belongs to the RNA polymerase alpha chain family. Homodimer. The RNAP catalytic core consists of 2 alpha, 1 beta, 1 beta' and 1 omega subunit. When a sigma factor is associated with the core the holoenzyme is formed, which can initiate transcription.

The enzyme catalyses RNA(n) + a ribonucleoside 5'-triphosphate = RNA(n+1) + diphosphate. Its function is as follows. DNA-dependent RNA polymerase catalyzes the transcription of DNA into RNA using the four ribonucleoside triphosphates as substrates. In Mycobacterium leprae (strain TN), this protein is DNA-directed RNA polymerase subunit alpha.